The sequence spans 149 residues: Chromophore lyase CpcS/CpeS homolog (149 aa).

The protein belongs to the CpcS/CpeS biliprotein lyase family.

The protein localises to the plastid. Its subcellular location is the chloroplast. In terms of biological role, might function to covalently attach a chromophore to Cys residue(s) of phycobiliproteins. The polypeptide is Chromophore lyase CpcS/CpeS homolog (Pyropia yezoensis (Susabi-nori)).